The primary structure comprises 118 residues: Basic phospholipase A2 nigroxin A (118 aa).

7 disulfides stabilise this stretch: Cys-11-Cys-70, Cys-25-Cys-117, Cys-27-Cys-43, Cys-42-Cys-98, Cys-49-Cys-91, Cys-59-Cys-84, and Cys-77-Cys-89. Residues Tyr-26, Gly-28, and Gly-30 each contribute to the Ca(2+) site. Residue His-46 is part of the active site. Asp-47 serves as a coordination point for Ca(2+). The active site involves Asp-92.

The protein belongs to the phospholipase A2 family. Group I subfamily. D49 sub-subfamily. Ca(2+) is required as a cofactor. As to expression, expressed by the venom gland.

It localises to the secreted. It catalyses the reaction a 1,2-diacyl-sn-glycero-3-phosphocholine + H2O = a 1-acyl-sn-glycero-3-phosphocholine + a fatty acid + H(+). Snake venom phospholipase A2 (PLA2) that has only a weak enzymatic activity. It has a myotoxic activity in vivo (dystrophic effect). PLA2 catalyzes the calcium-dependent hydrolysis of the 2-acyl groups in 3-sn-phosphoglycerides. This is Basic phospholipase A2 nigroxin A from Micrurus nigrocinctus (Central American coral snake).